Here is a 373-residue protein sequence, read N- to C-terminus: sn-glycerol-3-phosphate import ATP-binding protein UgpC (373 aa).

The ABC transporter domain occupies 4-235 (LTLSNITKSY…PASVFVATFI (232 aa)). Residue 37–44 (GPSGCGKS) participates in ATP binding.

It belongs to the ABC transporter superfamily. sn-glycerol-3-phosphate importer (TC 3.A.1.1.3) family. The complex is composed of two ATP-binding proteins (UgpC), two transmembrane proteins (UgpA and UgpE) and a solute-binding protein (UgpB).

It localises to the cell inner membrane. It catalyses the reaction sn-glycerol 3-phosphate(out) + ATP + H2O = sn-glycerol 3-phosphate(in) + ADP + phosphate + H(+). Part of the ABC transporter complex UgpBAEC involved in sn-glycerol-3-phosphate (G3P) import. Responsible for energy coupling to the transport system. The polypeptide is sn-glycerol-3-phosphate import ATP-binding protein UgpC (Psychromonas ingrahamii (strain DSM 17664 / CCUG 51855 / 37)).